A 498-amino-acid chain; its full sequence is ATP synthase subunit beta, chloroplastic (498 aa).

172 to 179 is an ATP binding site; sequence GGAGVGKT.

This sequence belongs to the ATPase alpha/beta chains family. As to quaternary structure, F-type ATPases have 2 components, CF(1) - the catalytic core - and CF(0) - the membrane proton channel. CF(1) has five subunits: alpha(3), beta(3), gamma(1), delta(1), epsilon(1). CF(0) has four main subunits: a(1), b(1), b'(1) and c(9-12).

The protein resides in the plastid. It localises to the chloroplast thylakoid membrane. The catalysed reaction is ATP + H2O + 4 H(+)(in) = ADP + phosphate + 5 H(+)(out). Produces ATP from ADP in the presence of a proton gradient across the membrane. The catalytic sites are hosted primarily by the beta subunits. In Asarum canadense (Wild ginger), this protein is ATP synthase subunit beta, chloroplastic.